Here is a 33-residue protein sequence, read N- to C-terminus: MSDIN-like toxin proprotein 5 (33 aa).

Residues 1–10 (MSDINATRLP) constitute a propeptide that is removed on maturation. Positions 11 to 18 (IFWFIYFP) form a cross-link, cyclopeptide (Ile-Pro). A propeptide spanning residues 19–32 (CVGDNVDNTLTRGE) is cleaved from the precursor.

The protein belongs to the MSDIN fungal toxin family. Processed by the macrocyclase-peptidase enzyme POPB to yield a toxic cyclic octapeptide. POPB first removes 10 residues from the N-terminus. Conformational trapping of the remaining peptide forces the enzyme to release this intermediate rather than proceed to macrocyclization. The enzyme rebinds the remaining peptide in a different conformation and catalyzes macrocyclization of the N-terminal 8 residues.

Probable toxin that belongs to the MSDIN-like toxin family responsible for a large number of food poisoning cases and deaths. The chain is MSDIN-like toxin proprotein 5 from Amanita phalloides (Death cap).